A 497-amino-acid polypeptide reads, in one-letter code: Zinc finger CCCH domain-containing protein 22 (497 aa).

The C3H1-type zinc-finger motif lies at 136–163; the sequence is SESMMICKFFMQQRCRFGSSCRSSHGLD. The tract at residues 236–281 is disordered; the sequence is AQMTDDDGEEEEEEDEQQSASDSEDSVSSDYDEGSPQGIGFLESTN. Positions 239–268 are enriched in acidic residues; it reads TDDDGEEEEEEDEQQSASDSEDSVSSDYDE. The G-patch domain occupies 300–346; that stretch reads TRGIASKMMASMGYREGMGLGVSGQGILNPILVKVLPAKRSLDYALE. Residues 352 to 387 form a disordered region; sequence ECKSEKQKKKRSRGGKRKRGKKFAEAAKAAKQEEES. Residues 357-372 show a composition bias toward basic residues; that stretch reads KQKKKRSRGGKRKRGK. Over residues 373–387 the composition is skewed to basic and acidic residues; sequence KFAEAAKAAKQEEES.

The chain is Zinc finger CCCH domain-containing protein 22 from Arabidopsis thaliana (Mouse-ear cress).